The chain runs to 407 residues: MKYDNLLDRFIKYVKVNTRSDPDSETTPSTESQEAFALTILKPEMEAIGLQDVHYNPVNGYLIGTLPANNPTLTRKIGFIAHMDTADFNAENVNPQIIDNYQGGDITLGSSNYKLDPKAFPNLNNYIGQTLITTDGTTLLGADDKSGIAEIMTAIEFLTSQPQIEHCDIKVAFGPDEEIGVGADKFEVADFEVDFAYTMDGGPLGELQYETFSAAALEVTFLGRNVHPGTAKDQMINALQLAIDFHEKLPAKERPEYTDGYQGFYHLTGLTGTVEEARASYIIRDFEEASFEARKVKVENIAQSMNAQLGTKRVLVELNDQYYNMKKVIEKDMTAIELAKEVMEELTIKPVIEPIRGGTDGSKISFMGIPTPNIFAGGENMHGRFEFVSLQTMERAVDVIIGLVCKA.

Histidine 82 contributes to the Zn(2+) binding site. Aspartate 84 is an active-site residue. Aspartate 143 contacts Zn(2+). Residue glutamate 177 is the Proton acceptor of the active site. 3 residues coordinate Zn(2+): glutamate 178, aspartate 200, and histidine 382.

It belongs to the peptidase M20B family. Requires Zn(2+) as cofactor.

It is found in the cytoplasm. The catalysed reaction is Release of the N-terminal residue from a tripeptide.. Cleaves the N-terminal amino acid of tripeptides. The protein is Peptidase T of Streptococcus pyogenes serotype M4 (strain MGAS10750).